A 350-amino-acid chain; its full sequence is UDP-N-acetylglucosamine--N-acetylmuramyl-(pentapeptide) pyrophosphoryl-undecaprenol N-acetylglucosamine transferase (350 aa).

UDP-N-acetyl-alpha-D-glucosamine contacts are provided by residues 9–11 (TGG), N123, R159, S181, and Q281.

Belongs to the glycosyltransferase 28 family. MurG subfamily.

Its subcellular location is the cell inner membrane. It carries out the reaction di-trans,octa-cis-undecaprenyl diphospho-N-acetyl-alpha-D-muramoyl-L-alanyl-D-glutamyl-meso-2,6-diaminopimeloyl-D-alanyl-D-alanine + UDP-N-acetyl-alpha-D-glucosamine = di-trans,octa-cis-undecaprenyl diphospho-[N-acetyl-alpha-D-glucosaminyl-(1-&gt;4)]-N-acetyl-alpha-D-muramoyl-L-alanyl-D-glutamyl-meso-2,6-diaminopimeloyl-D-alanyl-D-alanine + UDP + H(+). The protein operates within cell wall biogenesis; peptidoglycan biosynthesis. Its function is as follows. Cell wall formation. Catalyzes the transfer of a GlcNAc subunit on undecaprenyl-pyrophosphoryl-MurNAc-pentapeptide (lipid intermediate I) to form undecaprenyl-pyrophosphoryl-MurNAc-(pentapeptide)GlcNAc (lipid intermediate II). This chain is UDP-N-acetylglucosamine--N-acetylmuramyl-(pentapeptide) pyrophosphoryl-undecaprenol N-acetylglucosamine transferase, found in Helicobacter hepaticus (strain ATCC 51449 / 3B1).